The sequence spans 262 residues: tRNA (guanine-N(7)-)-methyltransferase (262 aa).

The tract at residues 1–58 is disordered; sequence MLPQDTNTDPLPGDDAESASGKSADASQGTPNPGDEVAHPRRIRSFVRRAGRTSTGQQ. Residues 40–51 are compositionally biased toward basic residues; that stretch reads PRRIRSFVRRAG. S-adenosyl-L-methionine-binding residues include E92, E117, D144, and D167. The active site involves D167. Residue K171 participates in substrate binding. An interaction with RNA region spans residues 173–178; sequence RHNKRR. Substrate is bound by residues D203 and 241–244; that span reads TKFE.

Belongs to the class I-like SAM-binding methyltransferase superfamily. TrmB family.

It carries out the reaction guanosine(46) in tRNA + S-adenosyl-L-methionine = N(7)-methylguanosine(46) in tRNA + S-adenosyl-L-homocysteine. The protein operates within tRNA modification; N(7)-methylguanine-tRNA biosynthesis. Functionally, catalyzes the formation of N(7)-methylguanine at position 46 (m7G46) in tRNA. The polypeptide is tRNA (guanine-N(7)-)-methyltransferase (Cupriavidus metallidurans (strain ATCC 43123 / DSM 2839 / NBRC 102507 / CH34) (Ralstonia metallidurans)).